The following is a 374-amino-acid chain: Peptide chain release factor 2 (374 aa).

At Q250 the chain carries N5-methylglutamine.

The protein belongs to the prokaryotic/mitochondrial release factor family. In terms of processing, methylated by PrmC. Methylation increases the termination efficiency of RF2.

The protein resides in the cytoplasm. Peptide chain release factor 2 directs the termination of translation in response to the peptide chain termination codons UGA and UAA. The sequence is that of Peptide chain release factor 2 from Roseobacter denitrificans (strain ATCC 33942 / OCh 114) (Erythrobacter sp. (strain OCh 114)).